Reading from the N-terminus, the 300-residue chain is N-acetylmuramic acid 6-phosphate etherase (300 aa).

Residues 55–217 (IAERLRAGGR…STGAMIRLGK (163 aa)) form the SIS domain. Residue Glu-83 is the Proton donor of the active site. Glu-114 is an active-site residue.

It belongs to the GCKR-like family. MurNAc-6-P etherase subfamily. In terms of assembly, homodimer.

It catalyses the reaction N-acetyl-D-muramate 6-phosphate + H2O = N-acetyl-D-glucosamine 6-phosphate + (R)-lactate. It functions in the pathway amino-sugar metabolism; N-acetylmuramate degradation. Functionally, specifically catalyzes the cleavage of the D-lactyl ether substituent of MurNAc 6-phosphate, producing GlcNAc 6-phosphate and D-lactate. In Symbiobacterium thermophilum (strain DSM 24528 / JCM 14929 / IAM 14863 / T), this protein is N-acetylmuramic acid 6-phosphate etherase.